The primary structure comprises 408 residues: Peptidase T (408 aa).

His78 is a binding site for Zn(2+). Residue Asp80 is part of the active site. Asp140 is a binding site for Zn(2+). The Proton acceptor role is filled by Glu173. Positions 174, 196, and 379 each coordinate Zn(2+).

It belongs to the peptidase M20B family. Zn(2+) is required as a cofactor.

It is found in the cytoplasm. It catalyses the reaction Release of the N-terminal residue from a tripeptide.. Functionally, cleaves the N-terminal amino acid of tripeptides. In Shigella flexneri serotype 5b (strain 8401), this protein is Peptidase T.